The chain runs to 120 residues: NAD(P)H-quinone oxidoreductase subunit 3, chloroplastic (120 aa).

3 consecutive transmembrane segments (helical) span residues 7 to 27 (YDTFWIYLSISSLIPILAFSI), 64 to 84 (MFALVFVVFDVETVFLYPWAM), and 88 to 108 (ILGLFTFIEAFIFVIILIVGL).

Belongs to the complex I subunit 3 family. As to quaternary structure, NDH is composed of at least 16 different subunits, 5 of which are encoded in the nucleus.

The protein resides in the plastid. It localises to the chloroplast thylakoid membrane. It carries out the reaction a plastoquinone + NADH + (n+1) H(+)(in) = a plastoquinol + NAD(+) + n H(+)(out). The catalysed reaction is a plastoquinone + NADPH + (n+1) H(+)(in) = a plastoquinol + NADP(+) + n H(+)(out). In terms of biological role, NDH shuttles electrons from NAD(P)H:plastoquinone, via FMN and iron-sulfur (Fe-S) centers, to quinones in the photosynthetic chain and possibly in a chloroplast respiratory chain. The immediate electron acceptor for the enzyme in this species is believed to be plastoquinone. Couples the redox reaction to proton translocation, and thus conserves the redox energy in a proton gradient. This Cryptomeria japonica (Japanese cedar) protein is NAD(P)H-quinone oxidoreductase subunit 3, chloroplastic.